Reading from the N-terminus, the 824-residue chain is Silver exporting P-type ATPase (824 aa).

A disordered region spans residues 89–112; that stretch reads ASEHHHHHDHHEVSPDKIKQSHRQ. Basic and acidic residues predominate over residues 98–112; the sequence is HHEVSPDKIKQSHRQ. 6 consecutive transmembrane segments (helical) span residues 167-187, 200-220, 234-254, 268-288, 427-447, and 455-475; these read FWLG…SHLF, TWLQ…PFFA, FTLV…ATVF, LVAI…LGQV, WFVP…SVWG, and GLIA…GLAT. The active-site 4-aspartylphosphate intermediate is the Asp-511. 2 helical membrane passes run 764-784 and 785-805; these read IRQN…VAAG and LLYP…AMAL.

It belongs to the cation transport ATPase (P-type) (TC 3.A.3) family. Type IB subfamily.

The protein localises to the cell membrane. It carries out the reaction Ag(+)(in) + ATP + H2O = Ag(+)(out) + ADP + phosphate + H(+). Its function is as follows. Component of the sil cation-efflux system that confers resistance to silver. The polypeptide is Silver exporting P-type ATPase (silP) (Salmonella typhimurium).